Reading from the N-terminus, the 205-residue chain is Small ribosomal subunit protein uS4 (205 aa).

The disordered stretch occupies residues 21–47; sequence GRPKSPFNKRDYGPGQHGQGRKGKPSD. The region spanning 94–154 is the S4 RNA-binding domain; it reads RRLDSVVYRA…DKSKQLAIID (61 aa).

It belongs to the universal ribosomal protein uS4 family. As to quaternary structure, part of the 30S ribosomal subunit. Contacts protein S5. The interaction surface between S4 and S5 is involved in control of translational fidelity.

Its function is as follows. One of the primary rRNA binding proteins, it binds directly to 16S rRNA where it nucleates assembly of the body of the 30S subunit. With S5 and S12 plays an important role in translational accuracy. This is Small ribosomal subunit protein uS4 from Pelagibacter ubique (strain HTCC1062).